We begin with the raw amino-acid sequence, 309 residues long: ATP synthase gamma chain (309 aa).

Belongs to the ATPase gamma chain family. As to quaternary structure, F-type ATPases have 2 components, CF(1) - the catalytic core - and CF(0) - the membrane proton channel. CF(1) has five subunits: alpha(3), beta(3), gamma(1), delta(1), epsilon(1). CF(0) has three main subunits: a, b and c.

The protein resides in the cell membrane. Produces ATP from ADP in the presence of a proton gradient across the membrane. The gamma chain is believed to be important in regulating ATPase activity and the flow of protons through the CF(0) complex. The protein is ATP synthase gamma chain of Mycobacterium sp. (strain JLS).